The primary structure comprises 526 residues: Histidine ammonia-lyase (526 aa).

Positions 143–145 form a cross-link, 5-imidazolinone (Ala-Gly); it reads ASG. Ser144 is modified (2,3-didehydroalanine (Ser)).

This sequence belongs to the PAL/histidase family. Contains an active site 4-methylidene-imidazol-5-one (MIO), which is formed autocatalytically by cyclization and dehydration of residues Ala-Ser-Gly.

The protein resides in the cytoplasm. The catalysed reaction is L-histidine = trans-urocanate + NH4(+). It functions in the pathway amino-acid degradation; L-histidine degradation into L-glutamate; N-formimidoyl-L-glutamate from L-histidine: step 1/3. The chain is Histidine ammonia-lyase from Aromatoleum aromaticum (strain DSM 19018 / LMG 30748 / EbN1) (Azoarcus sp. (strain EbN1)).